The chain runs to 437 residues: MLTAFAPAFKTPDLRKKLLFTLGIIVVYRLGTHIPIPGVDYKNVQECVDQASGNQGLFGLVNMFSGGALLQITVFALGIMPYITASIILQLLTVVIPRLEALKKEGQAGTAKITQYTRYLTVALAILQGTGLVATARSGALFSGCTVAGQIVPDQAIFTTVVMVICMTAGTCVVMWLGELITDRGIGNGMSILMFISIAATFPSALWAIKKQGELADGWIEFGTVILVGLVMVGLVVFVEQAQRRIPVQYAKRMIGRRSYGGTSTYIPLKVNQAGVIPVIFASSLLYIPALIVQFSNSTAGWATWITKNLADTAATPHIILYFFLIVFFAFFYVAISFNPEEVADNMKKYGGFIPGIRAGRPTAEYLSYVLNRITWPGSLYLGLIALVPTMALAGFGANQNFPFGGTSILIIVGVGLETVKQIESQLQQRNYEGFLR.

Transmembrane regions (helical) follow at residues 19-39, 69-89, 122-142, 157-177, 189-209, 219-239, 275-295, 318-338, 378-398, and 400-420; these read LFTL…IPGV, LLQI…SIIL, VALA…GALF, IFTT…VMWL, GMSI…LWAI, WIEF…VVFV, GVIP…IVQF, HIIL…AISF, GSLY…GFGA, and QNFP…LETV.

The protein belongs to the SecY/SEC61-alpha family. Component of the Sec protein translocase complex. Heterotrimer consisting of SecY, SecE and SecG subunits. The heterotrimers can form oligomers, although 1 heterotrimer is thought to be able to translocate proteins. Interacts with the ribosome. Interacts with SecDF, and other proteins may be involved. Interacts with SecA.

Its subcellular location is the cell membrane. Its function is as follows. The central subunit of the protein translocation channel SecYEG. Consists of two halves formed by TMs 1-5 and 6-10. These two domains form a lateral gate at the front which open onto the bilayer between TMs 2 and 7, and are clamped together by SecE at the back. The channel is closed by both a pore ring composed of hydrophobic SecY resides and a short helix (helix 2A) on the extracellular side of the membrane which forms a plug. The plug probably moves laterally to allow the channel to open. The ring and the pore may move independently. This chain is Protein translocase subunit SecY, found in Streptomyces lividans.